A 149-amino-acid polypeptide reads, in one-letter code: Large ribosomal subunit protein uL15 (149 aa).

Basic and acidic residues predominate over residues 1-28; sequence MVIKIHDLRPAPGSKRDKIRVGRGEGSK. The segment at 1–54 is disordered; the sequence is MVIKIHDLRPAPGSKRDKIRVGRGEGSKGKTAGRGTKGTKARKNVSPRFEGGQM.

It belongs to the universal ribosomal protein uL15 family. As to quaternary structure, part of the 50S ribosomal subunit.

In terms of biological role, binds to the 23S rRNA. This chain is Large ribosomal subunit protein uL15, found in Saccharopolyspora erythraea (strain ATCC 11635 / DSM 40517 / JCM 4748 / NBRC 13426 / NCIMB 8594 / NRRL 2338).